We begin with the raw amino-acid sequence, 371 residues long: Chorismate synthase (371 aa).

2 residues coordinate NADP(+): Arg-48 and Arg-54. Residues 132-134, 244-245, Gly-289, 304-308, and Arg-330 contribute to the FMN site; these read RSS, NA, and KPTSS.

It belongs to the chorismate synthase family. Homotetramer. The cofactor is FMNH2.

The catalysed reaction is 5-O-(1-carboxyvinyl)-3-phosphoshikimate = chorismate + phosphate. It functions in the pathway metabolic intermediate biosynthesis; chorismate biosynthesis; chorismate from D-erythrose 4-phosphate and phosphoenolpyruvate: step 7/7. Functionally, catalyzes the anti-1,4-elimination of the C-3 phosphate and the C-6 proR hydrogen from 5-enolpyruvylshikimate-3-phosphate (EPSP) to yield chorismate, which is the branch point compound that serves as the starting substrate for the three terminal pathways of aromatic amino acid biosynthesis. This reaction introduces a second double bond into the aromatic ring system. This Methylobacterium nodulans (strain LMG 21967 / CNCM I-2342 / ORS 2060) protein is Chorismate synthase.